Consider the following 240-residue polypeptide: MATLFIADLHLCAEEPAITAGFLRFLAGEARKADALYILGDLFEAWIGDDDPNPLHRQMAAAIKAVSDSGVPCYFIHGNRDFLLGKRFARESGMTLLPEEKVLELYGRRVLIMHGDTLCTDDAGYQAFRAKVHKPWLQTLFLALPLFVRKRIAARMRANSKEANSSKSLAIMDVNQNAVVSAMEKHQVQWLIHGHTHRPAVHELIANQQPAFRVVLGAWHTEGSMVKVTADDVELIHFPF.

Mn(2+) is bound by residues aspartate 8, histidine 10, aspartate 41, asparagine 79, and histidine 114. Residue 79-80 (NR) coordinates substrate. Substrate contacts are provided by aspartate 122, serine 160, asparagine 164, lysine 167, and histidine 195. Histidine 195 and histidine 197 together coordinate Mn(2+).

It belongs to the LpxH family. The cofactor is Mn(2+).

It is found in the cell inner membrane. The catalysed reaction is UDP-2-N,3-O-bis[(3R)-3-hydroxytetradecanoyl]-alpha-D-glucosamine + H2O = 2-N,3-O-bis[(3R)-3-hydroxytetradecanoyl]-alpha-D-glucosaminyl 1-phosphate + UMP + 2 H(+). Its pathway is glycolipid biosynthesis; lipid IV(A) biosynthesis; lipid IV(A) from (3R)-3-hydroxytetradecanoyl-[acyl-carrier-protein] and UDP-N-acetyl-alpha-D-glucosamine: step 4/6. Hydrolyzes the pyrophosphate bond of UDP-2,3-diacylglucosamine to yield 2,3-diacylglucosamine 1-phosphate (lipid X) and UMP by catalyzing the attack of water at the alpha-P atom. Involved in the biosynthesis of lipid A, a phosphorylated glycolipid that anchors the lipopolysaccharide to the outer membrane of the cell. This chain is UDP-2,3-diacylglucosamine hydrolase, found in Escherichia coli O17:K52:H18 (strain UMN026 / ExPEC).